The primary structure comprises 391 residues: Galactarate dehydratase (D-threo-forming) (391 aa).

Residue R15 coordinates substrate. Mg(2+) contacts are provided by D42 and H45. Y89 is a substrate binding site. Catalysis depends on Y90, which acts as the Proton donor. The Proton acceptor role is filled by Y164. The Mg(2+) site is built by D193, E221, and H246. A substrate-binding site is contributed by T296. T297 serves as a coordination point for Mg(2+). R385 contributes to the substrate binding site.

Belongs to the mandelate racemase/muconate lactonizing enzyme family. Mg(2+) serves as cofactor.

It carries out the reaction galactarate = (2S,3R)-dihydroxy-5-oxohexanedioate + H2O. Catalyzes the regioselective dehydration of galactarate into 2-keto-D-threo-4,5-dihydroxyadipate ((2S,3R)-dihydroxy-5-oxohexanedioate). Is not active on other acid sugars. This is Galactarate dehydratase (D-threo-forming) from Oceanobacillus iheyensis (strain DSM 14371 / CIP 107618 / JCM 11309 / KCTC 3954 / HTE831).